Here is a 240-residue protein sequence, read N- to C-terminus: Keratinocyte-associated protein 3 (240 aa).

A run of 4 helical transmembrane segments spans residues Val-21 to Gly-41, Val-63 to Ser-83, Val-94 to Leu-114, and Ala-163 to Tyr-183.

The protein belongs to the TMEM54 family. Expressed in skin, pancreas and keratinocytes.

Its subcellular location is the membrane. The sequence is that of Keratinocyte-associated protein 3 (KRTCAP3) from Homo sapiens (Human).